We begin with the raw amino-acid sequence, 47 residues long: Mu-theraphotoxin-An1a (47 aa).

3 disulfide bridges follow: Cys-4/Cys-34, Cys-8/Cys-39, and Cys-22/Cys-44.

In terms of processing, contains 3 disulfide bonds. Expressed by the venom gland.

It is found in the secreted. Its function is as follows. Is toxic to insects. Reduces amplitude and frequency of spontaneous firing and inhibits voltage-gated sodium current (Nav) in the dorsal unpaired median (DUM) neurons of P.americana. The polypeptide is Mu-theraphotoxin-An1a (Acanthoscurria natalensis (Tarantula spider)).